A 457-amino-acid polypeptide reads, in one-letter code: Cysteine--tRNA ligase (457 aa).

C28 serves as a coordination point for Zn(2+). Residues 30 to 40 carry the 'HIGH' region motif; the sequence is PTVYDTAHIGN. The Zn(2+) site is built by C212, H237, and E241. The 'KMSKS' region motif lies at 270-274; that stretch reads KMSKS. Position 273 (K273) interacts with ATP.

Belongs to the class-I aminoacyl-tRNA synthetase family. As to quaternary structure, monomer. The cofactor is Zn(2+).

It is found in the cytoplasm. The catalysed reaction is tRNA(Cys) + L-cysteine + ATP = L-cysteinyl-tRNA(Cys) + AMP + diphosphate. This is Cysteine--tRNA ligase from Wolbachia pipientis wMel.